The sequence spans 484 residues: Cobyric acid synthase (484 aa).

In terms of domain architecture, GATase cobBQ-type spans 251–438 (ALKIAVPVLS…LHGLFGNDEY (188 aa)). Cys333 acts as the Nucleophile in catalysis. Residue His430 is part of the active site.

It belongs to the CobB/CobQ family. CobQ subfamily.

It participates in cofactor biosynthesis; adenosylcobalamin biosynthesis. Catalyzes amidations at positions B, D, E, and G on adenosylcobyrinic A,C-diamide. NH(2) groups are provided by glutamine, and one molecule of ATP is hydrogenolyzed for each amidation. The sequence is that of Cobyric acid synthase from Allorhizobium ampelinum (strain ATCC BAA-846 / DSM 112012 / S4) (Agrobacterium vitis (strain S4)).